The primary structure comprises 199 residues: Glycerol-3-phosphate acyltransferase (199 aa).

Helical transmembrane passes span alanine 5–cysteine 25, alanine 54–phenylalanine 74, alanine 82–phenylalanine 102, valine 114–phenylalanine 134, and tyrosine 154–isoleucine 174.

The protein belongs to the PlsY family. In terms of assembly, probably interacts with PlsX.

The protein resides in the cell inner membrane. The catalysed reaction is an acyl phosphate + sn-glycerol 3-phosphate = a 1-acyl-sn-glycero-3-phosphate + phosphate. The protein operates within lipid metabolism; phospholipid metabolism. Functionally, catalyzes the transfer of an acyl group from acyl-phosphate (acyl-PO(4)) to glycerol-3-phosphate (G3P) to form lysophosphatidic acid (LPA). This enzyme utilizes acyl-phosphate as fatty acyl donor, but not acyl-CoA or acyl-ACP. The chain is Glycerol-3-phosphate acyltransferase from Haemophilus ducreyi (strain 35000HP / ATCC 700724).